A 473-amino-acid polypeptide reads, in one-letter code: Photosystem II CP43 reaction center protein (473 aa).

A propeptide spanning residues 1-14 (MKILYSPRRFYPVE) is cleaved from the precursor. Residue T15 is modified to N-acetylthreonine. The residue at position 15 (T15) is a Phosphothreonine. The next 5 membrane-spanning stretches (helical) occupy residues 69–93 (LFEV…PHLA), 134–155 (LIGP…KDKN), 178–200 (KALY…REIT), 255–275 (KPFA…LSYS), and 291–312 (WFNN…ASQA). E367 is a binding site for [CaMn4O5] cluster. The chain crosses the membrane as a helical span at residues 447–471 (RARAAAAGFEKGIDRDTEPVLSMTP).

The protein belongs to the PsbB/PsbC family. PsbC subfamily. In terms of assembly, PSII is composed of 1 copy each of membrane proteins PsbA, PsbB, PsbC, PsbD, PsbE, PsbF, PsbH, PsbI, PsbJ, PsbK, PsbL, PsbM, PsbT, PsbX, PsbY, PsbZ, Psb30/Ycf12, at least 3 peripheral proteins of the oxygen-evolving complex and a large number of cofactors. It forms dimeric complexes. Binds multiple chlorophylls and provides some of the ligands for the Ca-4Mn-5O cluster of the oxygen-evolving complex. It may also provide a ligand for a Cl- that is required for oxygen evolution. PSII binds additional chlorophylls, carotenoids and specific lipids. is required as a cofactor.

It is found in the plastid. The protein resides in the chloroplast thylakoid membrane. Its function is as follows. One of the components of the core complex of photosystem II (PSII). It binds chlorophyll and helps catalyze the primary light-induced photochemical processes of PSII. PSII is a light-driven water:plastoquinone oxidoreductase, using light energy to abstract electrons from H(2)O, generating O(2) and a proton gradient subsequently used for ATP formation. The chain is Photosystem II CP43 reaction center protein from Adiantum capillus-veneris (Maidenhair fern).